The primary structure comprises 428 residues: uncharacterized protein (428 aa).

The next 12 membrane-spanning stretches (helical) occupy residues 14-34, 55-75, 84-104, 107-127, 149-169, 182-202, 238-258, 272-292, 302-322, 324-344, 361-381, and 392-412; these read LYDW…FPLF, YTIA…GTIA, FFGF…FIPS, WLLL…ANVF, FGLG…VILL, ASQL…IPMI, LFLF…IITM, SLLI…IIYG, TMLY…YFME, TLDF…IQAL, FFGF…LLIA, and TAVF…AFVP.

It belongs to the major facilitator superfamily.

Its subcellular location is the cell membrane. This is an uncharacterized protein from Bacillus subtilis (strain 168).